The chain runs to 171 residues: Synaptonemal complex central element protein 2 (171 aa).

Positions 1–52 (MERHGVAAPPVELKDQEPPAIVESGEHRQSENHEETPGSVAPSASCQLPGPF) are disordered. Residues 24–36 (SGEHRQSENHEET) show a composition bias toward basic and acidic residues. Coiled coils occupy residues 52-83 (FSSL…DHAL) and 118-146 (QERL…QTVE).

This sequence belongs to the SYCE family. In terms of assembly, homodimer. Found in a complex with SYCP1 and SYCE1. Interacts with SYCP1 and SYCE1. Interacts with SYCE3. Interacts with TEX12. In terms of tissue distribution, meiotic cells (at protein level). Expressed in the ovary and testis.

It localises to the nucleus. The protein localises to the chromosome. Major component of the transverse central element of synaptonemal complexes (SCS), formed between homologous chromosomes during meiotic prophase. Requires SYCP1 in order to be incorporated into the central element. May have a role in the synaptonemal complex assembly, stabilization and recombination. The protein is Synaptonemal complex central element protein 2 (Syce2) of Mus musculus (Mouse).